The chain runs to 568 residues: MSKKLKDLPVSSTFTSNLPPDPLVPTVQAMKKADDRILHVPRFVEGGGLFTYLTPSLKANSQLLAYSPSSVKSLGLEESETQTEAFQQLVVGSNVDVNKCCPWAQCYGGYQFGDWAGQLGDGRVVSLCELTNPETGKRFEIQVKGAGRTPYSRFADGKAVLRSSIREYLCCEALYALGIPTTQALAISNLEGVVAQRETVEPCAVVCRMAPSWIRIGTFDLQGINNQIESLRKLADYCLNFVLKDGFHGGDTGNRYEKLLRDVAYRNAKTVAKWQAYGFMNGVLNTDNTSILGLSIDYGPFGFLDVYNPSFTPNHDDVFLRYSYRNQPDIIIWNLSKLASALVELIGACDKVDDLQYMEQLHNSTDLLKKAFAYTSEVFEKIVEEYKNIVQNDFYDLMFKRVGLPSDSSNKILITDLLQILEDYELDMPNCFSFLSRNSPSSMENEEYAAKLMQACICLNPNNERVRNESVKAFTNWVGRYSEATKTQEDSSRLASMKKVNPHFTLRNWVLEEVIKEAYIGKFELFKKVCKMAACPFEDTWGFSKEEEDYLCYNTTPSKSQIQCSCSS.

ATP contacts are provided by G120, G122, R123, K144, D156, G157, R208, and R215. D287 serves as the catalytic Proton acceptor. Residues N288 and D297 each contribute to the Mg(2+) site. Residue D297 participates in ATP binding.

It belongs to the SELO family. Mg(2+) is required as a cofactor. In terms of processing, forms probably one or more intrachain disulfide bridges.

It is found in the mitochondrion. The enzyme catalyses L-tyrosyl-[protein] + ATP = O-(5'-adenylyl)-L-tyrosyl-[protein] + diphosphate. Functionally, catalyzes the transfer of adenosine 5'-monophosphate (AMP) to Tyr residues of target mitochondrial proteins (AMPylation). Involved in redox homeostasis by regulating the cellular response to oxidative stress. Regulates protein S-glutathionylation levels possibly by AMPylation of deglutathionylation enzymes such as glutaredoxins. The sequence is that of Protein adenylyltransferase SelO, mitochondrial from Schizosaccharomyces pombe (strain 972 / ATCC 24843) (Fission yeast).